We begin with the raw amino-acid sequence, 397 residues long: Lysophospholipid transporter LplT (397 aa).

Residues 1 to 17 (MSESVHTNTSLWSKGMK) are Periplasmic-facing. Residues 18–38 (AVIVAQFLSAFGDNALLFATL) traverse the membrane as a helical segment. At 39-52 (ALLKAQFYPEWSQP) the chain is on the cytoplasmic side. The helical transmembrane segment at 53-73 (ILQMVFVGAYILFAPFVGQVA) threads the bilayer. The Periplasmic portion of the chain corresponds to 74–90 (DSFAKGRVMMFANGLKL). Residues 91 to 111 (LGAASICFGINPFLGYTLVGV) traverse the membrane as a helical segment. Over 112–144 (GAAAYSPAKYGILGELTTGSKLVKANGLMEAST) the chain is Cytoplasmic. The helical transmembrane segment at 145–165 (IAAILLGSVAGGVLADWHVLV) threads the bilayer. Residue A166 is a topological domain, periplasmic. Residues 167-187 (LAACALAYGGAVVANIYIPKL) traverse the membrane as a helical segment. The Cytoplasmic segment spans residues 188-226 (AAARPGQSWNLINMTRSFLNACTSLWCNGETRFSLVGTS). A helical membrane pass occupies residues 227 to 247 (LFWGAGVTLRFLLVLWVPVAL). Over 248–256 (GITDNATPT) the chain is Periplasmic. A helical transmembrane segment spans residues 257 to 277 (YLNAMVAIGIVVGAGAAAKLV). The Cytoplasmic portion of the chain corresponds to 278–280 (TLE). Residues 281–301 (TVSRCMPAGILIGVVVLIFSL) form a helical membrane-spanning segment. Topologically, residues 302–304 (QHE) are periplasmic. Residues 305–325 (LLPAYALLMLIGVLGGFFVVP) form a helical membrane-spanning segment. Topologically, residues 326-343 (LNALLQERGKKSVGAGNA) are cytoplasmic. A helical membrane pass occupies residues 344 to 364 (IAVQNLGENSAMLLMLGIYSL). Over 365–366 (AV) the chain is Periplasmic. Residues 367–387 (MVGIPVVPIGIGFGALFALAI) traverse the membrane as a helical segment. Residues 388 to 397 (TALWIWQRRH) are Cytoplasmic-facing.

The protein belongs to the major facilitator superfamily. LplT (TC 2.A.1.42) family.

The protein localises to the cell inner membrane. In terms of biological role, catalyzes the facilitated diffusion of 2-acyl-glycero-3-phosphoethanolamine (2-acyl-GPE) into the cell. The chain is Lysophospholipid transporter LplT from Shigella dysenteriae serotype 1 (strain Sd197).